Here is a 112-residue protein sequence, read N- to C-terminus: Integration host factor subunit alpha (112 aa).

This sequence belongs to the bacterial histone-like protein family. In terms of assembly, heterodimer of an alpha and a beta chain.

Functionally, this protein is one of the two subunits of integration host factor, a specific DNA-binding protein that functions in genetic recombination as well as in transcriptional and translational control. The polypeptide is Integration host factor subunit alpha (Rhizobium etli (strain CIAT 652)).